The primary structure comprises 191 residues: UPF0149 protein VS_2635 (191 aa).

Belongs to the UPF0149 family.

The protein is UPF0149 protein VS_2635 of Vibrio atlanticus (strain LGP32) (Vibrio splendidus (strain Mel32)).